We begin with the raw amino-acid sequence, 193 residues long: Acyl carrier protein phosphodiesterase (193 aa).

It belongs to the AcpH family.

The catalysed reaction is holo-[ACP] + H2O = apo-[ACP] + (R)-4'-phosphopantetheine + H(+). In terms of biological role, converts holo-ACP to apo-ACP by hydrolytic cleavage of the phosphopantetheine prosthetic group from ACP. The sequence is that of Acyl carrier protein phosphodiesterase from Salmonella choleraesuis (strain SC-B67).